The chain runs to 360 residues: MLVWLAEHLVKYYSGFNVFSYLTFRAIVSLLTALFISLWMGPRLIAHLQKLSFGQVVRNDGPESHFSKRGTPTMGGIMILTSIVVSVLLWAYPSNPYVWCVLFVLVGYGAVGFVDDYRKVVRKDTKGLIARWKYFWMSLIALTVAFALYITGKGTPATELVVPFFKDVMPQLGIFYVLLAYFVIVGTGNAVNLTDGLDGLAIMPTVLVAGGFALVAWATGNMNFASYLHIPYLRHAGELVIVCTAIVGAGLGFLWFNTYPAQVFMGDVGSLALGGALGIIAVLLRQEFLLVIMGGVFVVETLSVILQVGSFKLRGQRIFRMAPIHHHYELKGWPEPRVIVRFWVISLMLVLIGLATLKVR.

The next 10 membrane-spanning stretches (helical) occupy residues 26-46 (AIVSLLTALFISLWMGPRLIA), 72-92 (PTMGGIMILTSIVVSVLLWAY), 94-114 (SNPYVWCVLFVLVGYGAVGFV), 132-152 (WKYFWMSLIALTVAFALYITG), 168-188 (VMPQLGIFYVLLAYFVIVGTG), 199-219 (GLAIMPTVLVAGGFALVAWAT), 236-256 (AGELVIVCTAIVGAGLGFLWF), 263-283 (VFMGDVGSLALGGALGIIAVL), 288-308 (FLLVIMGGVFVVETLSVILQV), and 338-358 (VIVRFWVISLMLVLIGLATLK).

The protein belongs to the glycosyltransferase 4 family. MraY subfamily. Mg(2+) is required as a cofactor.

Its subcellular location is the cell inner membrane. It carries out the reaction UDP-N-acetyl-alpha-D-muramoyl-L-alanyl-gamma-D-glutamyl-meso-2,6-diaminopimeloyl-D-alanyl-D-alanine + di-trans,octa-cis-undecaprenyl phosphate = di-trans,octa-cis-undecaprenyl diphospho-N-acetyl-alpha-D-muramoyl-L-alanyl-D-glutamyl-meso-2,6-diaminopimeloyl-D-alanyl-D-alanine + UMP. It participates in cell wall biogenesis; peptidoglycan biosynthesis. In terms of biological role, catalyzes the initial step of the lipid cycle reactions in the biosynthesis of the cell wall peptidoglycan: transfers peptidoglycan precursor phospho-MurNAc-pentapeptide from UDP-MurNAc-pentapeptide onto the lipid carrier undecaprenyl phosphate, yielding undecaprenyl-pyrophosphoryl-MurNAc-pentapeptide, known as lipid I. In Cronobacter sakazakii (strain ATCC BAA-894) (Enterobacter sakazakii), this protein is Phospho-N-acetylmuramoyl-pentapeptide-transferase.